The sequence spans 786 residues: Probable glutamine--tRNA ligase (786 aa).

Basic and acidic residues predominate over residues 181–198 (DLAPKKKEKKPEGPKPSK). Positions 181–218 (DLAPKKKEKKPEGPKPSKDAAAAATAPGTKNQKEASPE) are disordered. The 'HIGH' region motif lies at 276-286 (PEPNGVLHIGH). Residues 277–279 (EPN) and 283–289 (HIGHAKA) contribute to the ATP site. 2 residues coordinate L-glutamine: Asp-309 and Tyr-444. ATP is bound by residues Thr-463, 492 to 493 (RL), and 500 to 502 (VSK). The short motif at 499–503 (VVSKR) is the 'KMSKS' region element.

This sequence belongs to the class-I aminoacyl-tRNA synthetase family.

The enzyme catalyses tRNA(Gln) + L-glutamine + ATP = L-glutaminyl-tRNA(Gln) + AMP + diphosphate. The polypeptide is Probable glutamine--tRNA ligase (Caenorhabditis elegans).